Reading from the N-terminus, the 215-residue chain is Small ribosomal subunit protein uS2 (215 aa).

This sequence belongs to the universal ribosomal protein uS2 family.

In Caldivirga maquilingensis (strain ATCC 700844 / DSM 13496 / JCM 10307 / IC-167), this protein is Small ribosomal subunit protein uS2.